The chain runs to 513 residues: Light-independent protochlorophyllide reductase subunit B (513 aa).

Asp36 contributes to the [4Fe-4S] cluster binding site. Residue Asp299 is the Proton donor of the active site. A substrate-binding site is contributed by 434 to 435 (GM).

This sequence belongs to the ChlB/BchB/BchZ family. As to quaternary structure, protochlorophyllide reductase is composed of three subunits; ChlL, ChlN and ChlB. Forms a heterotetramer of two ChlB and two ChlN subunits. [4Fe-4S] cluster serves as cofactor.

Its subcellular location is the plastid. The protein localises to the chloroplast. The enzyme catalyses chlorophyllide a + oxidized 2[4Fe-4S]-[ferredoxin] + 2 ADP + 2 phosphate = protochlorophyllide a + reduced 2[4Fe-4S]-[ferredoxin] + 2 ATP + 2 H2O. It participates in porphyrin-containing compound metabolism; chlorophyll biosynthesis (light-independent). Functionally, component of the dark-operative protochlorophyllide reductase (DPOR) that uses Mg-ATP and reduced ferredoxin to reduce ring D of protochlorophyllide (Pchlide) to form chlorophyllide a (Chlide). This reaction is light-independent. The NB-protein (ChlN-ChlB) is the catalytic component of the complex. The polypeptide is Light-independent protochlorophyllide reductase subunit B (Marchantia polymorpha (Common liverwort)).